Here is a 261-residue protein sequence, read N- to C-terminus: Ribosomal RNA small subunit methyltransferase J (261 aa).

Residues 111-112 (RD), 127-128 (ER), 163-164 (SS), and Asp181 contribute to the S-adenosyl-L-methionine site.

Belongs to the methyltransferase superfamily. RsmJ family.

Its subcellular location is the cytoplasm. It catalyses the reaction guanosine(1516) in 16S rRNA + S-adenosyl-L-methionine = N(2)-methylguanosine(1516) in 16S rRNA + S-adenosyl-L-homocysteine + H(+). In terms of biological role, specifically methylates the guanosine in position 1516 of 16S rRNA. This chain is Ribosomal RNA small subunit methyltransferase J, found in Shewanella sp. (strain MR-4).